The following is a 427-amino-acid chain: Peptidase B (427 aa).

Mn(2+) contacts are provided by Lys-195 and Asp-200. Lys-207 is a catalytic residue. Asp-218, Asp-277, and Glu-279 together coordinate Mn(2+). Arg-281 is an active-site residue.

The protein belongs to the peptidase M17 family. Homohexamer. It depends on Mn(2+) as a cofactor.

The protein resides in the cytoplasm. The enzyme catalyses Release of an N-terminal amino acid, Xaa, from a peptide or arylamide. Xaa is preferably Glu or Asp but may be other amino acids, including Leu, Met, His, Cys and Gln.. Probably plays an important role in intracellular peptide degradation. This is Peptidase B from Escherichia coli (strain SMS-3-5 / SECEC).